The sequence spans 206 residues: Small ribosomal subunit protein uS4 (206 aa).

One can recognise an S4 RNA-binding domain in the interval 96–156 (TRLDNVVYRM…EKSRTQARIK (61 aa)).

Belongs to the universal ribosomal protein uS4 family. In terms of assembly, part of the 30S ribosomal subunit. Contacts protein S5. The interaction surface between S4 and S5 is involved in control of translational fidelity.

In terms of biological role, one of the primary rRNA binding proteins, it binds directly to 16S rRNA where it nucleates assembly of the body of the 30S subunit. Functionally, with S5 and S12 plays an important role in translational accuracy. The protein is Small ribosomal subunit protein uS4 of Shewanella halifaxensis (strain HAW-EB4).